Consider the following 196-residue polypeptide: Probable GTP-binding protein EngB (196 aa).

Positions 21–195 (DVSEICLIGR…YELIDKLLGS (175 aa)) constitute an EngB-type G domain. Residues 29 to 36 (GRSNVGKS), 56 to 60 (GKTRL), 75 to 78 (DAPG), 142 to 145 (TKLD), and 174 to 176 (ISN) each bind GTP. Mg(2+) contacts are provided by Ser-36 and Thr-58.

This sequence belongs to the TRAFAC class TrmE-Era-EngA-EngB-Septin-like GTPase superfamily. EngB GTPase family. The cofactor is Mg(2+).

In terms of biological role, necessary for normal cell division and for the maintenance of normal septation. The protein is Probable GTP-binding protein EngB of Mycoplasma mycoides subsp. mycoides SC (strain CCUG 32753 / NCTC 10114 / PG1).